The chain runs to 95 residues: MQITKTAVAGTLESSDVQIRIAPSTTMDIEINSSVAKQFGEDILNSVTAVLAQFEVSSAQIIIEDKGALDCVLRARLKAALLRATDEALAWEKIL.

Ser-14 is subject to O-(phosphoribosyl dephospho-coenzyme A)serine.

The protein belongs to the CitD family. In terms of assembly, oligomer with a subunit composition of (alpha,beta,gamma)6.

Its subcellular location is the cytoplasm. Covalent carrier of the coenzyme of citrate lyase. This is Citrate lyase acyl carrier protein from Haemophilus ducreyi (strain 35000HP / ATCC 700724).